A 470-amino-acid polypeptide reads, in one-letter code: Cyclic AMP receptor-like protein D (470 aa).

The Extracellular segment spans residues 1–16 (MSSCSSLSMDDRVKIG). The chain crosses the membrane as a helical span at residues 17–37 (YGSIAGASLSIIGSIGTIILI). Topologically, residues 38–123 (KIRNKKQEKK…NNNQKTKVSH (86 aa)) are cytoplasmic. The helical transmembrane segment at 124–144 (FIINLSIANLLASIFMITIKL) threads the bilayer. The Extracellular portion of the chain corresponds to 145 to 176 (MMIHFNDKFIKVLPSTANHSFNALISVCTIGN). N-linked (GlcNAc...) asparagine glycosylation occurs at N162. Residues C172 and C287 are joined by a disulfide bond. The chain crosses the membrane as a helical span at residues 177 to 197 (GVIGFSFISTFFWTLAISMYI). Topologically, residues 198-253 (YQQFLSSSTINSNNNNNNINNINNNNNNNINNINNSKNNNSINNFNNSNKSNKIIK) are cytoplasmic. A helical transmembrane segment spans residues 254 to 274 (MLFYFVCWVIPFVLGSILVSG). Residues 275–295 (SRLIELNSDLPWCSIDSNIQL) are Extracellular-facing. Residues 296-316 (ISFYFPLIICLLATTFFTILI) form a helical membrane-spanning segment. The Cytoplasmic segment spans residues 317–342 (KYKFSNDKLACSSSSLINLQSKIIQR). The helical transmembrane segment at 343-363 (LILFLIVILVCWVPSLISFFI) threads the bilayer. Topologically, residues 364 to 372 (SFFSKNCKQ) are extracellular. A helical membrane pass occupies residues 373-393 (FLWLEIISSTIQSCQGILNFL). Residues 394–470 (SYLSIFKKLK…DFDNNQIQEK (77 aa)) are Cytoplasmic-facing.

It belongs to the G-protein coupled receptor 5 family.

It localises to the membrane. Functionally, receptor for cAMP. This is Cyclic AMP receptor-like protein D (crlD) from Dictyostelium discoideum (Social amoeba).